A 147-amino-acid chain; its full sequence is Nucleoside diphosphate kinase (147 aa).

ATP contacts are provided by Lys9, Phe57, Arg85, Thr91, Arg102, and Asn112. His115 (pros-phosphohistidine intermediate) is an active-site residue.

The protein belongs to the NDK family. In terms of assembly, homotetramer. Requires Mg(2+) as cofactor.

The protein resides in the cytoplasm. It catalyses the reaction a 2'-deoxyribonucleoside 5'-diphosphate + ATP = a 2'-deoxyribonucleoside 5'-triphosphate + ADP. It carries out the reaction a ribonucleoside 5'-diphosphate + ATP = a ribonucleoside 5'-triphosphate + ADP. Functionally, major role in the synthesis of nucleoside triphosphates other than ATP. The ATP gamma phosphate is transferred to the NDP beta phosphate via a ping-pong mechanism, using a phosphorylated active-site intermediate. This is Nucleoside diphosphate kinase from Listeria monocytogenes serotype 4b (strain F2365).